Consider the following 94-residue polypeptide: Co-chaperonin GroES (94 aa).

The protein belongs to the GroES chaperonin family. Heptamer of 7 subunits arranged in a ring. Interacts with the chaperonin GroEL.

It localises to the cytoplasm. Together with the chaperonin GroEL, plays an essential role in assisting protein folding. The GroEL-GroES system forms a nano-cage that allows encapsulation of the non-native substrate proteins and provides a physical environment optimized to promote and accelerate protein folding. GroES binds to the apical surface of the GroEL ring, thereby capping the opening of the GroEL channel. The chain is Co-chaperonin GroES from Latilactobacillus sakei subsp. sakei (strain 23K) (Lactobacillus sakei subsp. sakei).